Here is a 593-residue protein sequence, read N- to C-terminus: Cysteine/serine-rich nuclear protein 1 (593 aa).

Disordered stretches follow at residues 1-66 (MTGL…RDFC), 313-392 (FREL…GVDD), and 478-497 (REGS…GQSS). 2 stretches are compositionally biased toward low complexity: residues 17–46 (SSVS…VSRA) and 351–372 (SCSS…TSGA).

This sequence belongs to the AXUD1 family.

It is found in the nucleus. In terms of biological role, binds to the consensus sequence 5'-AGAGTG-3' and has transcriptional activator activity. May have a tumor-suppressor function. May play a role in apoptosis. In Pongo abelii (Sumatran orangutan), this protein is Cysteine/serine-rich nuclear protein 1 (CSRNP1).